Here is a 419-residue protein sequence, read N- to C-terminus: E3 ubiquitin-protein ligase RNF130 (419 aa).

An N-terminal signal peptide occupies residues 1 to 27; sequence MSGAARAGPARLAALALLTCSLWPTRA. Topologically, residues 28–194 are extracellular; it reads DNASQEYYTA…MPPKNFSRGS (167 aa). 6 N-linked (GlcNAc...) asparagine glycosylation sites follow: N29, N40, N112, N135, N172, and N189. Residues 105–176 enclose the PA domain; that stretch reads IALLQRGNCT…SYLEKNISVQ (72 aa). Residues 195-217 traverse the membrane as a helical segment; that stretch reads LVFVSISFIVLMIISSAWLIFYF. At 218-419 the chain is on the cytoplasmic side; it reads IQKIRYTNAR…SLNANEVEWF (202 aa). The segment at 264–305 adopts an RING-type zinc-finger fold; that stretch reads CAVCIESYKQNDVVRVLPCKHVFHKSCVDPWLSEHCTCPMCK.

As to expression, expression is highest in liver, with lesser amounts in the lung, spleen, brain, heart, kidney and testis.

It localises to the membrane. Its subcellular location is the cytoplasm. The catalysed reaction is S-ubiquitinyl-[E2 ubiquitin-conjugating enzyme]-L-cysteine + [acceptor protein]-L-lysine = [E2 ubiquitin-conjugating enzyme]-L-cysteine + N(6)-ubiquitinyl-[acceptor protein]-L-lysine.. It functions in the pathway protein modification; protein ubiquitination. Functionally, acts as an E3 ubiquitin-protein ligase. May have a role during the programmed cell death of hematopoietic cells. In Mus musculus (Mouse), this protein is E3 ubiquitin-protein ligase RNF130.